The chain runs to 181 residues: Oligoribonuclease (181 aa).

The region spanning 8-171 (LIWVDLEMTG…VDIQESIAEL (164 aa)) is the Exonuclease domain. Residue Tyr129 is part of the active site.

Belongs to the oligoribonuclease family.

It is found in the cytoplasm. Its function is as follows. 3'-to-5' exoribonuclease specific for small oligoribonucleotides. This Shewanella loihica (strain ATCC BAA-1088 / PV-4) protein is Oligoribonuclease.